The sequence spans 667 residues: Glycine--tRNA ligase beta subunit (667 aa).

The protein belongs to the class-II aminoacyl-tRNA synthetase family. Tetramer of two alpha and two beta subunits.

It is found in the cytoplasm. The catalysed reaction is tRNA(Gly) + glycine + ATP = glycyl-tRNA(Gly) + AMP + diphosphate. The sequence is that of Glycine--tRNA ligase beta subunit from Rickettsia canadensis (strain McKiel).